The chain runs to 240 residues: tRNA (guanine-N(1)-)-methyltransferase (240 aa).

S-adenosyl-L-methionine-binding positions include Gly110 and 130 to 135; that span reads IGDYVL.

The protein belongs to the RNA methyltransferase TrmD family. In terms of assembly, homodimer.

The protein localises to the cytoplasm. The catalysed reaction is guanosine(37) in tRNA + S-adenosyl-L-methionine = N(1)-methylguanosine(37) in tRNA + S-adenosyl-L-homocysteine + H(+). Specifically methylates guanosine-37 in various tRNAs. In Macrococcus caseolyticus (strain JCSC5402) (Macrococcoides caseolyticum), this protein is tRNA (guanine-N(1)-)-methyltransferase.